A 389-amino-acid polypeptide reads, in one-letter code: Chalcone synthase 3 (389 aa).

Residue C164 is part of the active site.

Belongs to the thiolase-like superfamily. Chalcone/stilbene synthases family.

The enzyme catalyses (E)-4-coumaroyl-CoA + 3 malonyl-CoA + 3 H(+) = 2',4,4',6'-tetrahydroxychalcone + 3 CO2 + 4 CoA. Its pathway is secondary metabolite biosynthesis; flavonoid biosynthesis. The primary product of this enzyme is 4,2',4',6'-tetrahydroxychalcone (also termed naringenin-chalcone or chalcone) which can under specific conditions spontaneously isomerize into naringenin. The sequence is that of Chalcone synthase 3 (CHS3) from Camellia sinensis (Tea plant).